Consider the following 508-residue polypeptide: MARFVDRVVLHLEAGDGGNGCASVHREKFKPLGGPDGGNGGHGGDIILTVSPQAHTLLDLHYRPHLKAQRGANGAGDHRNGARGQDLVLEVPAGTVVMSESGETLADLTSPGMTFIAAKGGFGGLGNAALASAARKAPGFALKGEPGEQHDVILELKSMADIGLVGFPSAGKSSLISVMSAAKPKIGDYPFTTLQPNLGVVDMGNDAFTIADVPGLIPGASQGKGLGLDFLRHIERTAVLAHVVDAATLEPGRDPISDIEALEEELAAYQSALDEDTSLGDLRERARIVILNKADIPDALELAEFLKEDIEEKFGWPVFIISAVARKGLDPLKYAMLDLVQQSRKKRPKQKVEERIVVRPQAVDARKKNKDFEILADPQVENGYLVVGEKPERWIIQTDFENDEAVGYLADRLARMGVEDALWKKGARAGCTVTIGEVSFEWEPTTAAGVEVQMSGRGTDMRLERNTRVSAQERKRASQVRRGLIDEYDFGDDQKVTRESANRDRWQG.

In terms of domain architecture, Obg spans 2 to 159 (ARFVDRVVLH…HDVILELKSM (158 aa)). The region spanning 160–341 (ADIGLVGFPS…LKYAMLDLVQ (182 aa)) is the OBG-type G domain. GTP-binding positions include 166-173 (GFPSAGKS), 191-195 (FTTLQ), 212-215 (DVPG), 292-295 (NKAD), and 322-324 (SAV). S173 and T193 together coordinate Mg(2+). The 81-residue stretch at 364–444 (DARKKNKDFE…IGEVSFEWEP (81 aa)) folds into the OCT domain.

Belongs to the TRAFAC class OBG-HflX-like GTPase superfamily. OBG GTPase family. In terms of assembly, monomer. It depends on Mg(2+) as a cofactor.

The protein resides in the cytoplasm. In terms of biological role, an essential GTPase which binds GTP, GDP and possibly (p)ppGpp with moderate affinity, with high nucleotide exchange rates and a fairly low GTP hydrolysis rate. Plays a role in control of the cell cycle, stress response, ribosome biogenesis and in those bacteria that undergo differentiation, in morphogenesis control. This Corynebacterium diphtheriae (strain ATCC 700971 / NCTC 13129 / Biotype gravis) protein is GTPase Obg.